Reading from the N-terminus, the 150-residue chain is Large ribosomal subunit protein bL9 (150 aa).

The protein belongs to the bacterial ribosomal protein bL9 family.

Functionally, binds to the 23S rRNA. This chain is Large ribosomal subunit protein bL9, found in Hydrogenovibrio crunogenus (strain DSM 25203 / XCL-2) (Thiomicrospira crunogena).